A 148-amino-acid polypeptide reads, in one-letter code: Deoxyuridine 5'-triphosphate nucleotidohydrolase (148 aa).

Substrate contacts are provided by residues 68-70 (RSG), N81, 85-87 (TID), and K95.

This sequence belongs to the dUTPase family. Mg(2+) is required as a cofactor.

It carries out the reaction dUTP + H2O = dUMP + diphosphate + H(+). It participates in pyrimidine metabolism; dUMP biosynthesis; dUMP from dCTP (dUTP route): step 2/2. This enzyme is involved in nucleotide metabolism: it produces dUMP, the immediate precursor of thymidine nucleotides and it decreases the intracellular concentration of dUTP so that uracil cannot be incorporated into DNA. In Rickettsia conorii (strain ATCC VR-613 / Malish 7), this protein is Deoxyuridine 5'-triphosphate nucleotidohydrolase.